The chain runs to 433 residues: Pyrimidine-nucleoside phosphorylase (433 aa).

81–83 (KHS) contributes to the phosphate binding site. K(+) is bound by residues Gly-88 and Thr-90. Phosphate contacts are provided by residues Thr-92, 108–110 (KMS), and Thr-120. Substrate is bound by residues Arg-168 and Lys-187. K(+) contacts are provided by Leu-243, Ala-246, and Glu-255.

Belongs to the thymidine/pyrimidine-nucleoside phosphorylase family. Homodimer. K(+) is required as a cofactor.

The enzyme catalyses uridine + phosphate = alpha-D-ribose 1-phosphate + uracil. It carries out the reaction thymidine + phosphate = 2-deoxy-alpha-D-ribose 1-phosphate + thymine. It catalyses the reaction 2'-deoxyuridine + phosphate = 2-deoxy-alpha-D-ribose 1-phosphate + uracil. In terms of biological role, catalyzes phosphorolysis of the pyrimidine nucleosides uridine, thymidine and 2'-deoxyuridine with the formation of the corresponding pyrimidine base and ribose-1-phosphate. In Staphylococcus epidermidis (strain ATCC 35984 / DSM 28319 / BCRC 17069 / CCUG 31568 / BM 3577 / RP62A), this protein is Pyrimidine-nucleoside phosphorylase (pdp).